The sequence spans 371 residues: Polygalacturonase (371 aa).

The N-terminal stretch at 1–19 (MPSYLRNLVWATLAAGLVS) is a signal peptide. A propeptide spanning residues 20–34 (AAPTPSRVSDLTKKS) is cleaved from the precursor. Cysteine 38 and cysteine 53 are oxidised to a cystine. 7 PbH1 repeats span residues 95-117 (GPLI…VINA), 165-195 (SDNL…DISE), 196-217 (STGV…AINS), 218-238 (GQNI…SIGS), 247-268 (VKNV…RIKT), 276-298 (VSDV…VIEQ), and 310-355 (TSGV…DITS). The active-site Proton donor is aspartate 210. Residues cysteine 212 and cysteine 228 are joined by a disulfide bond. Histidine 232 is a catalytic residue. Asparagine 249 carries an N-linked (GlcNAc...) asparagine glycan. Cystine bridges form between cysteine 338/cysteine 343 and cysteine 362/cysteine 371.

This sequence belongs to the glycosyl hydrolase 28 family.

It is found in the secreted. The enzyme catalyses (1,4-alpha-D-galacturonosyl)n+m + H2O = (1,4-alpha-D-galacturonosyl)n + (1,4-alpha-D-galacturonosyl)m.. The protein is Polygalacturonase of Penicillium janthinellum (Penicillium vitale).